Here is a 487-residue protein sequence, read N- to C-terminus: b(0,+)-type amino acid transporter 1 (487 aa).

Residues 1–20 (MEETSPRRRREDEKSVHSTE) are compositionally biased toward basic and acidic residues. Residues 1–23 (MEETSPRRRREDEKSVHSTEPKT) form a disordered region. Topologically, residues 1–31 (MEETSPRRRREDEKSVHSTEPKTTSLQKEVG) are cytoplasmic. Ser18 is modified (phosphoserine). Residues 32-55 (LLSGICIIVGTIIGSGIFISPKSV) traverse the membrane as a helical segment. Position 43-47 (43-47 (IIGSG)) interacts with L-arginine. The Extracellular portion of the chain corresponds to 56–62 (LANTESV). Residues 63 to 84 (GPCLIIWAACGVLATLGALCFA) traverse the membrane as a helical segment. The Cytoplasmic segment spans residues 85–110 (ELGTMITKSGGEYPYLMEAFGPIPAY). A helical membrane pass occupies residues 111-137 (LFSWTSLIVMKPSSFAIICLSFSEYVC). Over 138–147 (AAFYLGCRPP) the chain is Extracellular. A run of 2 helical transmembrane segments spans residues 148–169 (AVVVKLLAAAAILLITTVNALS) and 170–193 (VRLGSYVQNVFTAAKLVIVAIIII). Over 194 to 217 (SGLVLLAQGNVKNFQNSFEGSQTS) the chain is Extracellular. A helical transmembrane segment spans residues 218–238 (VGSISLAFYNGLWAYDGWNQL). Position 233 (Asp233) interacts with L-arginine. Residues 239 to 251 (NYITEELRNPYRN) lie on the Cytoplasmic side of the membrane. A helical membrane pass occupies residues 252–274 (LPMAIVIGIPLVTVCYILMNIAY). Residues 275 to 302 (FTVMTPTELLQSQAVAVTFGDRVLYPAS) are Extracellular-facing. The chain crosses the membrane as a helical span at residues 303–325 (WVVPLFVAFSTIGAANGTCFTAG). Topologically, residues 326–351 (RLIYVAGREGHMLKVLSYISVKRLTP) are cytoplasmic. The next 2 helical transmembrane spans lie at 352–370 (APALVFYGIIAIIYIIPGD) and 371–391 (INSLVNYFSFAAWLFYGMTIL). The Cytoplasmic portion of the chain corresponds to 392–410 (GLVVMRFTRKDLERPIKVP). The chain crosses the membrane as a helical span at residues 411–431 (IFIPIIVILVSVFLILAPIIS). The Extracellular segment spans residues 432-434 (SPA). A helical transmembrane segment spans residues 435–450 (WEYLYCVLFILSGLIF). Over 451–487 (YFLFVHYKFRWAQKISRPITKHLQMLMEVVPPEKDPE) the chain is Cytoplasmic.

Belongs to the amino acid-polyamine-organocation (APC) superfamily. In terms of assembly, disulfide-linked heterodimer composed of the catalytic light chain subunit SLC7A9 and the heavy chain subunit SLC3A1. The heterodimer is the minimal functional unit. Assembles in heterotetramers (dimers of heterodimers) and higher order oligomers; the oligomerization is mediated by SLC3A1 likely to prevent degradation and facilitate heteromer trafficking to the plasma membrane. Interacts with CAV1. In terms of tissue distribution, outer medulla of kidney (at protein level). Kidney and small intestine. In the kidney localized to the apical membrane of the proximal tubules.

It localises to the apical cell membrane. It catalyses the reaction L-leucine(out) + L-arginine(in) = L-leucine(in) + L-arginine(out). The enzyme catalyses L-histidine(out) + L-arginine(in) = L-histidine(in) + L-arginine(out). The catalysed reaction is L-arginine(in) + L-phenylalanine(out) = L-arginine(out) + L-phenylalanine(in). It carries out the reaction L-cysteine(out) + L-arginine(in) = L-cysteine(in) + L-arginine(out). It catalyses the reaction L-cystine(out) + L-arginine(in) = L-cystine(in) + L-arginine(out). The enzyme catalyses L-lysine(out) + L-arginine(in) = L-lysine(in) + L-arginine(out). Its function is as follows. Associates with SLC3A1 to form a functional transporter complex that mediates the electrogenic exchange between cationic amino acids and neutral amino acids, with a stoichiometry of 1:1. Has system b(0,+)-like activity with high affinity for extracellular cationic amino acids and L-cystine and lower affinity for intracellular neutral amino acids. Substrate exchange is driven by high concentration of intracellular neutral amino acids and the intracellular reduction of L-cystine to L-cysteine. Required for reabsorption of L-cystine and dibasic amino acids across the brush border membrane in renal proximal tubules. The chain is b(0,+)-type amino acid transporter 1 (Slc7a9) from Rattus norvegicus (Rat).